A 668-amino-acid chain; its full sequence is DNA ligase (668 aa).

Residues 37-41 (DAIYD), 86-87 (SL), and E116 contribute to the NAD(+) site. K118 serves as the catalytic N6-AMP-lysine intermediate. The NAD(+) site is built by R139, E176, K289, and K313. Zn(2+)-binding residues include C407, C410, C425, and C430. The BRCT domain maps to 586 to 668 (AQSSALAGLT…RALIETREMP (83 aa)).

Belongs to the NAD-dependent DNA ligase family. LigA subfamily. Requires Mg(2+) as cofactor. Mn(2+) serves as cofactor.

It carries out the reaction NAD(+) + (deoxyribonucleotide)n-3'-hydroxyl + 5'-phospho-(deoxyribonucleotide)m = (deoxyribonucleotide)n+m + AMP + beta-nicotinamide D-nucleotide.. In terms of biological role, DNA ligase that catalyzes the formation of phosphodiester linkages between 5'-phosphoryl and 3'-hydroxyl groups in double-stranded DNA using NAD as a coenzyme and as the energy source for the reaction. It is essential for DNA replication and repair of damaged DNA. This chain is DNA ligase, found in Gloeobacter violaceus (strain ATCC 29082 / PCC 7421).